The chain runs to 171 residues: 3-hydroxydecanoyl-[acyl-carrier-protein] dehydratase (171 aa).

His70 is an active-site residue.

It belongs to the thioester dehydratase family. FabA subfamily. Homodimer.

It is found in the cytoplasm. It catalyses the reaction a (3R)-hydroxyacyl-[ACP] = a (2E)-enoyl-[ACP] + H2O. The enzyme catalyses (3R)-hydroxydecanoyl-[ACP] = (2E)-decenoyl-[ACP] + H2O. The catalysed reaction is (2E)-decenoyl-[ACP] = (3Z)-decenoyl-[ACP]. Its pathway is lipid metabolism; fatty acid biosynthesis. Necessary for the introduction of cis unsaturation into fatty acids. Catalyzes the dehydration of (3R)-3-hydroxydecanoyl-ACP to E-(2)-decenoyl-ACP and then its isomerization to Z-(3)-decenoyl-ACP. Can catalyze the dehydratase reaction for beta-hydroxyacyl-ACPs with saturated chain lengths up to 16:0, being most active on intermediate chain length. The sequence is that of 3-hydroxydecanoyl-[acyl-carrier-protein] dehydratase from Shewanella baltica (strain OS223).